Reading from the N-terminus, the 275-residue chain is Putative carbamate hydrolase RutD (275 aa).

This sequence belongs to the AB hydrolase superfamily. Hydrolase RutD family.

The catalysed reaction is carbamate + 2 H(+) = NH4(+) + CO2. Its function is as follows. Involved in pyrimidine catabolism. May facilitate the hydrolysis of carbamate, a reaction that can also occur spontaneously. The chain is Putative carbamate hydrolase RutD from Escherichia coli O6:H1 (strain CFT073 / ATCC 700928 / UPEC).